The following is a 265-amino-acid chain: ClpXP adapter protein SpxH (265 aa).

Belongs to the SpxH family. Interacts with Spx.

It localises to the cytoplasm. Functionally, adapter protein required for efficient degradation of Spx by ClpXP under non-stress conditions. Interaction with Spx stabilizes Spx and exposes the C-terminus of Spx for recognition and proteolysis by ClpXP. In Staphylococcus epidermidis (strain ATCC 35984 / DSM 28319 / BCRC 17069 / CCUG 31568 / BM 3577 / RP62A), this protein is ClpXP adapter protein SpxH.